Here is a 440-residue protein sequence, read N- to C-terminus: MTSIYHILDRIPAIYKQDMEIEYEYLAMQLIKSGKLRIDTNDCCNFARFTDPALNINLMISKEELTKPHLIPETTKLFQSLYKNSASDQKINSIFDNLKKQIQKLQPVKKEVTEMLARLFVQSAHPIVIRWLLLNKTEVFLTYSHNIGDMMDIVSWQRVGGNSGMQSTNGKDVAIFVSCGGNPFAENNKEHPSYGDGFAAVARLQIIAAQELGHFADIKRDDKGRQLTRHAANFSGTKATDKVRIARKSDIIHCNNLFNKLLNAGMKKQLEYETKLKFYNTNKINGVKVNAIKCMILIYKFRLLNYSSKNNLIFIRKFKTYKYMALMLEAMFKDMQDNLSPNAEVYKNKNPEIEEAIACIEALARVPQQTIKWGYLTTKETMHHLYKIYYNEVIPSLITSYNSFTGENYKRNLKKPKSSFFSKINIFSNKKLILKPVREL.

This is an uncharacterized protein from Rickettsia prowazekii (strain Madrid E).